Reading from the N-terminus, the 762-residue chain is uncharacterized protein (762 aa).

Positions 334–542 constitute an MCM domain; the sequence is IIDILSNYLI…SDEEIAEHIL (209 aa). 384-391 contacts ATP; it reads TDPGIGKS.

The protein belongs to the MCM family.

This is an uncharacterized protein from Methanocaldococcus jannaschii (strain ATCC 43067 / DSM 2661 / JAL-1 / JCM 10045 / NBRC 100440) (Methanococcus jannaschii).